A 59-amino-acid chain; its full sequence is MSEQRYNRYEKARILGARALQVSYGAPVLIDTDQTEPILVAAEEYDAGALPFTVRRESN.

Belongs to the archaeal Rpo6/eukaryotic RPB6 RNA polymerase subunit family. Part of the RNA polymerase complex.

The protein localises to the cytoplasm. The catalysed reaction is RNA(n) + a ribonucleoside 5'-triphosphate = RNA(n+1) + diphosphate. Functionally, DNA-dependent RNA polymerase (RNAP) catalyzes the transcription of DNA into RNA using the four ribonucleoside triphosphates as substrates. In Halorubrum lacusprofundi (strain ATCC 49239 / DSM 5036 / JCM 8891 / ACAM 34), this protein is DNA-directed RNA polymerase subunit Rpo6.